The chain runs to 377 residues: Anhydro-N-acetylmuramic acid kinase (377 aa).

12–19 provides a ligand contact to ATP; that stretch reads GTSLDGID.

This sequence belongs to the anhydro-N-acetylmuramic acid kinase family.

It carries out the reaction 1,6-anhydro-N-acetyl-beta-muramate + ATP + H2O = N-acetyl-D-muramate 6-phosphate + ADP + H(+). It participates in amino-sugar metabolism; 1,6-anhydro-N-acetylmuramate degradation. It functions in the pathway cell wall biogenesis; peptidoglycan recycling. Catalyzes the specific phosphorylation of 1,6-anhydro-N-acetylmuramic acid (anhMurNAc) with the simultaneous cleavage of the 1,6-anhydro ring, generating MurNAc-6-P. Is required for the utilization of anhMurNAc either imported from the medium or derived from its own cell wall murein, and thus plays a role in cell wall recycling. This chain is Anhydro-N-acetylmuramic acid kinase, found in Methylorubrum populi (strain ATCC BAA-705 / NCIMB 13946 / BJ001) (Methylobacterium populi).